Consider the following 542-residue polypeptide: Putative selenium-binding protein (542 aa).

It belongs to the selenium-binding protein family.

The protein is Putative selenium-binding protein of Caenorhabditis elegans.